The chain runs to 519 residues: MDALCASMKGTAQLVAICNQESAFWGEKISGRRLINKGFGVRSCKSFTTQQRGRNVTPAVLTRDINKEMLPFEESMFEEQPTADPKAVASVILGGGVGTRLFPLTSRRAKPAVPIGGCYRLIDVPMSNCINSGIRKIFILTQFNSFSLNRHLATYNFGNGVGFGDGFVEVLAGTQTPGDGRKMWFQAADAVREFIWVFENQKNKNVEHIIILSGDHLYRMNYMDFVQKHIDTNADITVSCVPMDDGRASDFGLMKIDETGAIIQFAEKPKGPALKAMQVDTSILGLSEQEASNFPYIASMGVYVFKTDVLLNLLKSAYPSCNDFGSEIIPSAVKDHNVQAYLFNDYWEDIGTVKSFFDANLALTKQPPKFDFNDPKTPFYTSARFLPPTKVDKSRIVDAIISHGCFLRECNIQHSIVGVRSRLDYGVEFKDTMMMGADYYQTECEIASLLAEGKVPIGVGPNTKIQNCIIDKNAKIGKDVVILNKEGVEEADRSAEGFYIRSGITVIMKNATIKDGTVI.

The protein belongs to the bacterial/plant glucose-1-phosphate adenylyltransferase family. As to quaternary structure, heterotetramer. In terms of tissue distribution, leaves and tubers.

Its subcellular location is the plastid. The protein localises to the chloroplast. It is found in the amyloplast. It carries out the reaction alpha-D-glucose 1-phosphate + ATP + H(+) = ADP-alpha-D-glucose + diphosphate. It participates in glycan biosynthesis; starch biosynthesis. Activated by 3'phosphoglycerate, inhibited by orthophosphate. Allosteric regulation. This protein plays a role in synthesis of starch. It catalyzes the synthesis of the activated glycosyl donor, ADP-glucose from Glc-1-P and ATP. This is Glucose-1-phosphate adenylyltransferase large subunit 2, chloroplastic/amyloplastic (AGPS2) from Solanum tuberosum (Potato).